A 56-amino-acid polypeptide reads, in one-letter code: Small ribosomal subunit protein uS14 (56 aa).

Zn(2+)-binding residues include cysteine 21, cysteine 24, cysteine 39, and cysteine 42.

The protein belongs to the universal ribosomal protein uS14 family. The cofactor is Zn(2+).

This Eremothecium gossypii (strain ATCC 10895 / CBS 109.51 / FGSC 9923 / NRRL Y-1056) (Yeast) protein is Small ribosomal subunit protein uS14 (RPS29).